The primary structure comprises 416 residues: Cysteate synthase (416 aa).

N6-(pyridoxal phosphate)lysine is present on K104. N130 serves as a coordination point for pyridoxal 5'-phosphate.

This sequence belongs to the threonine synthase family. Cysteate synthase subfamily. In terms of assembly, homotrimer. Pyridoxal 5'-phosphate serves as cofactor.

It carries out the reaction O-phospho-L-serine + sulfite + H(+) = L-cysteate + phosphate. It functions in the pathway cofactor biosynthesis; coenzyme M biosynthesis. Its function is as follows. Specifically catalyzes the beta-elimination of phosphate from L-phosphoserine and the beta-addition of sulfite to the dehydroalanine intermediate to produce L-cysteate. The chain is Cysteate synthase from Methanosarcina mazei (strain ATCC BAA-159 / DSM 3647 / Goe1 / Go1 / JCM 11833 / OCM 88) (Methanosarcina frisia).